The chain runs to 547 residues: MDAFTRAWYALERHYQDTCHILLRDRFAAEPDRFERMHERLDGMLFDYSKNRFGEDTLQLLCRLAETADLEGKMRALRTGAKVNGSEGRAALHTALRLPDGADAVYADGRDVLPEIRRELNRALKFAHSLDDGLYQGITGKRIADFVHIGIGGSDLGPAMCVQALEPFRRQISVHFVSNADPACLDEVLCRLNPETTMFCVASKSFKTPETLLNAEAVKAWYRGAGFSESETAHHFCAVSADTEAAQSFGIAAERVFAMYDWVGGRYSVWSPVGLPVMVAVGGARFRELLAGAHAMDSHFFHTPPRRNIPVLMALIAVWYNNFQHADGQTAVPYSHNLRLLPAWLNQLDMESLGKSRASDGSPAACKTGGIVFGGEGVNCQHAYFQLLHQGTRLIPCDFIVPMTAQGAEDGRSRFTVANAFAQAEALMKGKTLDEARAELADLPEAERERLAPHKEFPGNRPSNSILLDRLTPCNLGMLMAAYEHKTFVQGAIWNVNPFDQWGVEYGKQLAKTIIGELEGGTSVHDASTEGLMAFYRECRLKGGGAA.

Residue Glu-351 is the Proton donor of the active site. Active-site residues include His-382 and Lys-508.

This sequence belongs to the GPI family.

Its subcellular location is the cytoplasm. It catalyses the reaction alpha-D-glucose 6-phosphate = beta-D-fructose 6-phosphate. It functions in the pathway carbohydrate biosynthesis; gluconeogenesis. The protein operates within carbohydrate degradation; glycolysis; D-glyceraldehyde 3-phosphate and glycerone phosphate from D-glucose: step 2/4. Its function is as follows. Catalyzes the reversible isomerization of glucose-6-phosphate to fructose-6-phosphate. In Neisseria gonorrhoeae (strain ATCC 700825 / FA 1090), this protein is Glucose-6-phosphate isomerase 2.